Consider the following 462-residue polypeptide: GTPase Der (462 aa).

EngA-type G domains follow at residues 9 to 171 and 201 to 372; these read KTIA…GLTK and IQVG…ECFS. Residues 15–22, 62–66, 123–126, 207–214, 254–258, and 318–321 each bind GTP; these read GQPNVGKS, DTGGM, NKID, GRVNVGKS, DTAGI, and NKWD. Residues 373–457 enclose the KH-like domain; the sequence is KRIPTSLLNS…PLIINAKDKK (85 aa).

This sequence belongs to the TRAFAC class TrmE-Era-EngA-EngB-Septin-like GTPase superfamily. EngA (Der) GTPase family. As to quaternary structure, associates with the 50S ribosomal subunit.

In terms of biological role, GTPase that plays an essential role in the late steps of ribosome biogenesis. The protein is GTPase Der of Helicobacter acinonychis (strain Sheeba).